The chain runs to 444 residues: Methylenetetrahydrofolate--tRNA-(uracil-5-)-methyltransferase TrmFO (444 aa).

9–14 (GAGMAG) provides a ligand contact to FAD.

This sequence belongs to the MnmG family. TrmFO subfamily. The cofactor is FAD.

The protein localises to the cytoplasm. It catalyses the reaction uridine(54) in tRNA + (6R)-5,10-methylene-5,6,7,8-tetrahydrofolate + NADH + H(+) = 5-methyluridine(54) in tRNA + (6S)-5,6,7,8-tetrahydrofolate + NAD(+). The enzyme catalyses uridine(54) in tRNA + (6R)-5,10-methylene-5,6,7,8-tetrahydrofolate + NADPH + H(+) = 5-methyluridine(54) in tRNA + (6S)-5,6,7,8-tetrahydrofolate + NADP(+). Its function is as follows. Catalyzes the folate-dependent formation of 5-methyl-uridine at position 54 (M-5-U54) in all tRNAs. In Cereibacter sphaeroides (strain ATCC 17025 / ATH 2.4.3) (Rhodobacter sphaeroides), this protein is Methylenetetrahydrofolate--tRNA-(uracil-5-)-methyltransferase TrmFO.